We begin with the raw amino-acid sequence, 102 residues long: Small ribosomal subunit protein bS6 (102 aa).

Belongs to the bacterial ribosomal protein bS6 family.

Functionally, binds together with bS18 to 16S ribosomal RNA. The protein is Small ribosomal subunit protein bS6 of Solidesulfovibrio magneticus (strain ATCC 700980 / DSM 13731 / RS-1) (Desulfovibrio magneticus).